A 124-amino-acid chain; its full sequence is Probable glycine cleavage system H protein (124 aa).

Residues 25-106 (TATIGITDYA…PYGSWLVKMA (82 aa)) form the Lipoyl-binding domain. Lys-66 is modified (N6-lipoyllysine).

It belongs to the GcvH family. The glycine cleavage system is composed of four proteins: P, T, L and H. (R)-lipoate is required as a cofactor.

Functionally, the glycine cleavage system catalyzes the degradation of glycine. The H protein shuttles the methylamine group of glycine from the P protein to the T protein. The polypeptide is Probable glycine cleavage system H protein (Thermoplasma acidophilum (strain ATCC 25905 / DSM 1728 / JCM 9062 / NBRC 15155 / AMRC-C165)).